The chain runs to 119 residues: Hemerythrin-like protein (119 aa).

Fe cation contacts are provided by H26, H56, E60, H75, H79, H107, and D112.

Belongs to the hemerythrin family.

Functionally, oxygen-binding protein. The oxygen-binding site contains two iron atoms. The protein is Hemerythrin-like protein (nfa1) of Naegleria fowleri (Brain eating amoeba).